Here is an 86-residue protein sequence, read N- to C-terminus: Small ribosomal subunit protein eS27y (86 aa).

The C4-type zinc-finger motif lies at 39–61; that stretch reads CQGCFNITTVFSHSQTVVVCGNC.

This sequence belongs to the eukaryotic ribosomal protein eS27 family. Zn(2+) is required as a cofactor.

In terms of biological role, may be involved in the elimination of damaged mRNA after UV irradiation. The sequence is that of Small ribosomal subunit protein eS27y (RPS27B) from Arabidopsis thaliana (Mouse-ear cress).